Reading from the N-terminus, the 367-residue chain is tRNA-specific 2-thiouridylase MnmA (367 aa).

ATP-binding positions include 12–19 and Met38; that span reads GMSGGVDS. The interaction with target base in tRNA stretch occupies residues 98–100; the sequence is NPD. Catalysis depends on Cys103, which acts as the Nucleophile. Cys103 and Cys200 are joined by a disulfide. Gly128 serves as a coordination point for ATP. The tract at residues 150 to 152 is interaction with tRNA; it reads KDQ. Cys200 serves as the catalytic Cysteine persulfide intermediate. The interaction with tRNA stretch occupies residues 312 to 313; the sequence is RY.

Belongs to the MnmA/TRMU family. Interacts with TusE.

It localises to the cytoplasm. It carries out the reaction S-sulfanyl-L-cysteinyl-[protein] + uridine(34) in tRNA + AH2 + ATP = 2-thiouridine(34) in tRNA + L-cysteinyl-[protein] + A + AMP + diphosphate + H(+). Catalyzes the 2-thiolation of uridine at the wobble position (U34) of tRNA(Lys), tRNA(Glu) and tRNA(Gln), leading to the formation of s(2)U34, the first step of tRNA-mnm(5)s(2)U34 synthesis. Sulfur is provided by IscS, via a sulfur-relay system. Binds ATP and its substrate tRNAs. The polypeptide is tRNA-specific 2-thiouridylase MnmA (Serratia proteamaculans (strain 568)).